The sequence spans 369 residues: Somatostatin receptor type 2 (369 aa).

The Extracellular segment spans residues 1 to 43 (MDMAYELLNGSQPWLSSPFDLNGSVATANSSNQTEPYYDLTSN). Residues Asn9, Asn22, Asn29, and Asn32 are each glycosylated (N-linked (GlcNAc...) asparagine). Residues 44–67 (AVLTFIYFVVCIIGLCGNTLVIYV) form a helical membrane-spanning segment. Residues 68-78 (ILRYAKMKTIT) are Cytoplasmic-facing. A helical membrane pass occupies residues 79 to 103 (NIYILNLAIADELFMLGLPFLAMQV). The Extracellular portion of the chain corresponds to 104-118 (ALVHWPFGKAICRVV). Cys115 and Cys193 are oxidised to a cystine. A helical membrane pass occupies residues 119-138 (MTVDGINQFTSIFCLTVMSI). Topologically, residues 139–161 (DRYLAVVHPIKSAKWRRPRTAKM) are cytoplasmic. Residues 162–181 (INVAVWGVSLLVILPIMIYA) traverse the membrane as a helical segment. At 182-207 (GLRSNQWGRSSCTINWPGESGAWYTG) the chain is on the extracellular side. Residues 208–229 (FIIYAFILGFLVPLTIICLCYL) traverse the membrane as a helical segment. Residues 230–253 (FIIIKVKSSGIRVGSSKRKKSEKK) are Cytoplasmic-facing. The chain crosses the membrane as a helical span at residues 254–278 (VTRMVSIVVAVFIFCWLPFYIFNVS). The Extracellular portion of the chain corresponds to 279–288 (SVSVAISPTP). Residues 289–303 (ALKGMFDFVVVLTYA) traverse the membrane as a helical segment. The Cytoplasmic segment spans residues 304–369 (NSCANPILYA…LLNGDLQTSI (66 aa)). A lipid anchor (S-palmitoyl cysteine) is attached at Cys328. Phosphoserine is present on residues Ser341, Ser343, and Ser348. Thr353 and Thr354 each carry phosphothreonine.

It belongs to the G-protein coupled receptor 1 family. As to quaternary structure, homodimer and heterodimer with SSTR3 and SSTR5. Heterodimerization with SSTR3 inactivates SSTR3 receptor function. Heterodimerization with SSTR5 is enhanced by agonist stimulation of SSTR2 and increases SSTR2 cell growth inhibition activity. Following agonist stimulation, homodimers dissociate into monomers which is required for receptor internalization. Interacts with beta-arrestin; this interaction is necessary for receptor internalization and is destabilized by heterodimerization with SSTR5 which results in increased recycling of SSTR2 to the cell surface. Interacts (via C-terminus) with SHANK1 (via PDZ domain). Phosphorylated on serine and threonine residues in response to agonist stimulation, leading to receptor desensitization and rapid internalization. Phosphorylated to a greater extent on serine than threonine residues. Threonine phosphorylation is required for arrestin binding and receptor endocytosis but is not necessary for desensitization.

It localises to the cell membrane. The protein resides in the cytoplasm. In terms of biological role, receptor for somatostatin-14 and -28. This receptor is coupled via pertussis toxin sensitive G proteins to inhibition of adenylyl cyclase. In addition it stimulates phosphotyrosine phosphatase and PLC via pertussis toxin insensitive as well as sensitive G proteins. Inhibits calcium entry by suppressing voltage-dependent calcium channels. Acts as the functionally dominant somatostatin receptor in pancreatic alpha- and beta-cells where it mediates the inhibitory effect of somatostatin-14 on hormone secretion. Inhibits cell growth through enhancement of MAPK1 and MAPK2 phosphorylation and subsequent up-regulation of CDKN1B. Stimulates neuronal migration and axon outgrowth and may participate in neuron development and maturation during brain development. Mediates negative regulation of insulin receptor signaling through PTPN6. Inactivates SSTR3 receptor function following heterodimerization. This chain is Somatostatin receptor type 2 (SSTR2), found in Sus scrofa (Pig).